The sequence spans 397 residues: Acetate kinase 2 (397 aa).

N10 provides a ligand contact to Mg(2+). An ATP-binding site is contributed by K17. R90 contributes to the substrate binding site. D147 serves as the catalytic Proton donor/acceptor. Residues 207-211 (HLGNG), 281-283 (DAR), and 329-333 (GIGEN) contribute to the ATP site. E385 serves as a coordination point for Mg(2+).

This sequence belongs to the acetokinase family. Homodimer. Mg(2+) serves as cofactor. Requires Mn(2+) as cofactor.

The protein resides in the cytoplasm. The enzyme catalyses acetate + ATP = acetyl phosphate + ADP. Its pathway is metabolic intermediate biosynthesis; acetyl-CoA biosynthesis; acetyl-CoA from acetate: step 1/2. In terms of biological role, catalyzes the formation of acetyl phosphate from acetate and ATP. Can also catalyze the reverse reaction. This Vibrio vulnificus (strain CMCP6) protein is Acetate kinase 2.